Consider the following 670-residue polypeptide: Tyramine beta-hydroxylase (670 aa).

Residues His26–Lys35 show a composition bias toward basic residues. A disordered region spans residues His26–Arg63. A compositionally biased stretch (low complexity) spans Gln38–Gln61. A helical transmembrane segment spans residues Pro65–Thr81. Residues Lys104–Gly220 enclose the DOMON domain. The N-linked (GlcNAc...) asparagine glycan is linked to Asn235. Tyr281 is a catalytic residue. 2 disulfide bridges follow: Cys283–Cys334 and Cys319–Cys344. Cu(2+) contacts are provided by His312 and His313. Positions 382, 461, 463, and 536 each coordinate Cu(2+). 3 disulfides stabilise this stretch: Cys439/Cys552, Cys443/Cys613, and Cys515/Cys537. His461 is a catalytic residue. N-linked (GlcNAc...) asparagine glycosylation occurs at Asn614.

This sequence belongs to the copper type II ascorbate-dependent monooxygenase family. As to quaternary structure, is most likely a monomer under physiological conditions, although under conditions of high pH and low ionic strength the dimeric form predominates. Both forms are equally active. It depends on Cu(2+) as a cofactor. As to expression, present in head and in neurons innervating the oviduct (at protein level).

It localises to the membrane. It catalyses the reaction tyramine + L-ascorbate + O2 = (R)-octopamine + L-dehydroascorbate + H2O. Functionally, catalyzes the hydroxylation of tyramine into octopamine, a neurotransmitter involved in ovulation and locomotion. Functions in an amine-mediated Bacc-dependent signaling pathway that negatively regulates acute ethanol sensitivity. Involved in facilitation of nociceptive escape behavior in response to potentially damaging stimuli, such as high temperatures. This is Tyramine beta-hydroxylase (Tbh) from Drosophila melanogaster (Fruit fly).